Here is a 319-residue protein sequence, read N- to C-terminus: Taste receptor type 2 member 14 (319 aa).

The Extracellular portion of the chain corresponds to 1–7 (MDGVIKS). Residues 8–28 (IFTFILILEFIIGNLGNSFIV) form a helical membrane-spanning segment. At 29-55 (LVNCIDWVKRRKISLVDQLLIALAISR) the chain is on the cytoplasmic side. Residues 56 to 76 (ISLVWSIFGSWCVSVVFPALF) form a helical membrane-spanning segment. Residues 77–87 (ATEKLLRMLTN) lie on the Extracellular side of the membrane. Cholesterol contacts are provided by threonine 86 and tryptophan 89. The helical transmembrane segment at 88 to 108 (IWTVTNHFSVWLATILGTFYF) threads the bilayer. The Cytoplasmic segment spans residues 109–129 (LKIANFSNSIFLYLKWRVKKV). The helical transmembrane segment at 130-150 (VLVLLLVTLVLLFLNILLINI) threads the bilayer. Residues 151 to 184 (HINASINGYRGNMTCSSASCNFIRFSSAIALTST) lie on the Extracellular side of the membrane. 2 N-linked (GlcNAc...) asparagine glycosylation sites follow: asparagine 153 and asparagine 162. Alanine 180 is a cholesterol binding site. The chain crosses the membrane as a helical span at residues 185–205 (VFILIPFTLSLATFLLLSFSL). Residues 206–232 (WKHRKKMQHTVKGYRDVSTKAHRGVMQ) lie on the Cytoplasmic side of the membrane. A helical transmembrane segment spans residues 233–253 (TVITFLLLYAVFFLTFFVSIW). Residues 254–261 (ISERLKEN) lie on the Extracellular side of the membrane. Residues 262-282 (QIIILSEMMGLAYPSGHSCVL) traverse the membrane as a helical segment. Residues isoleucine 265 and glutamate 268 each coordinate cholesterol. Residues 283–317 (ILGNKKLRQASLSVLWWLRYRFKDGELSGHKEFRE) are Cytoplasmic-facing.

This sequence belongs to the G-protein coupled receptor T2R family. Core component of the TAS2R14-GNAI1 complex, consisting of TAS2R14, GNAI1, GNB1 and GNG2; within the complex interacts with GNAI1. Core component of the TAS2R14-GNAT3 complex, consisting of TAS2R14, GNAT3, GNB1 and GNG2; within the complex interacts with GNAT3. Core component of the TAS2R14-GNAS2 complex, consisting of TAS2R14, GNAS2, GNB1 and GNG2; within the complex interacts with GNAS2.

It localises to the membrane. The catalysed reaction is Ca(2+)(in) = Ca(2+)(out). It carries out the reaction 3',5'-cyclic AMP(in) = 3',5'-cyclic AMP(out). Its activity is regulated as follows. Basal activity is enhanced by binding to bitter tastants, such as flufenamic acid and aristolochic acid. Regulated by cholesterol in a concentration-dependent manner. Gustducin-linked G-protein coupled receptor that plays a role in the perception of bitterness. The activity of this receptor stimulates GNAT3, activating the gustducin G-protein pathway. Likely plays a role in sensing the chemical composition of the gastrointestinal content and other extra-oral tissues via the inhibitory G-protein pathways. The protein is Taste receptor type 2 member 14 (TAS2R14) of Papio hamadryas (Hamadryas baboon).